Consider the following 403-residue polypeptide: Dual-specificity RNA methyltransferase RlmN (403 aa).

Glutamate 121 (proton acceptor) is an active-site residue. One can recognise a Radical SAM core domain in the interval 127–375; sequence ETDRGTLCVS…VRTPRGRDIL (249 aa). A disulfide bond links cysteine 134 and cysteine 378. 3 residues coordinate [4Fe-4S] cluster: cysteine 141, cysteine 145, and cysteine 148. S-adenosyl-L-methionine-binding positions include 204-205, serine 236, 258-260, and asparagine 335; these read GE and SLH. The active-site S-methylcysteine intermediate is cysteine 378.

Belongs to the radical SAM superfamily. RlmN family. Requires [4Fe-4S] cluster as cofactor.

The protein resides in the cytoplasm. It carries out the reaction adenosine(2503) in 23S rRNA + 2 reduced [2Fe-2S]-[ferredoxin] + 2 S-adenosyl-L-methionine = 2-methyladenosine(2503) in 23S rRNA + 5'-deoxyadenosine + L-methionine + 2 oxidized [2Fe-2S]-[ferredoxin] + S-adenosyl-L-homocysteine. The enzyme catalyses adenosine(37) in tRNA + 2 reduced [2Fe-2S]-[ferredoxin] + 2 S-adenosyl-L-methionine = 2-methyladenosine(37) in tRNA + 5'-deoxyadenosine + L-methionine + 2 oxidized [2Fe-2S]-[ferredoxin] + S-adenosyl-L-homocysteine. Specifically methylates position 2 of adenine 2503 in 23S rRNA and position 2 of adenine 37 in tRNAs. m2A2503 modification seems to play a crucial role in the proofreading step occurring at the peptidyl transferase center and thus would serve to optimize ribosomal fidelity. This is Dual-specificity RNA methyltransferase RlmN from Rhodopseudomonas palustris (strain BisA53).